Here is a 143-residue protein sequence, read N- to C-terminus: Large ribosomal subunit protein uL11 (143 aa).

Belongs to the universal ribosomal protein uL11 family. In terms of assembly, part of the ribosomal stalk of the 50S ribosomal subunit. Interacts with L10 and the large rRNA to form the base of the stalk. L10 forms an elongated spine to which L12 dimers bind in a sequential fashion forming a multimeric L10(L12)X complex. One or more lysine residues are methylated.

Forms part of the ribosomal stalk which helps the ribosome interact with GTP-bound translation factors. This is Large ribosomal subunit protein uL11 from Phenylobacterium zucineum (strain HLK1).